The following is a 316-amino-acid chain: MKVLWVAVVVALLAGCQADMEGELGPEEPLTTQQPRGKDSQPWEQALGRFWDYLRWVQTLSDQVQEELLNTQVIQELTALMEETMKEVKAYKEELEGQLGPMAQETQARVSKELQAAQARLGSDMEDLRNRLAQYRSEVQAMLGQSTEELRARMASHLRKLPKRLLRDADDLKKRLAVYQAGASEGAERSLSAIRERFGPLVEQGQSRAATLSTLAGQPLLERAEAWRQKLHGRLEEVGVRAQDRLDKIRQQLEEVHAKVEEQGNQMRLQAEAFQARLRSWFEPLVEDMQRQWAGLVEKVQLALRPSPTSPPSENH.

Residues 1 to 18 (MKVLWVAVVVALLAGCQA) form the signal peptide. Thr32 carries O-linked (GalNAc...) threonine glycosylation. 8 consecutive repeat copies span residues 79–100 (ALMEETMKEVKAYKEELEGQLG), 101–122 (PMAQETQARVSKELQAAQARLG), 123–144 (SDMEDLRNRLAQYRSEVQAMLG), 145–166 (QSTEELRARMASHLRKLPKRLL), 167–188 (RDADDLKKRLAVYQAGASEGAE), 189–210 (RSLSAIRERFGPLVEQGQSRAA), 211–232 (TLSTLAGQPLLERAEAWRQKLH), and 233–254 (GRLEEVGVRAQDRLDKIRQQLE). The tract at residues 79–254 (ALMEETMKEV…RLDKIRQQLE (176 aa)) is 8 X 22 AA approximate tandem repeats. The residue at position 142 (Met142) is a Methionine sulfoxide. Ser146 is subject to Phosphoserine. Positions 157 to 167 (HLRKLPKRLLR) are LDL and other lipoprotein receptors binding. 161 to 164 (LPKR) lines the heparin pocket. The tract at residues 209–289 (AATLSTLAGQ…SWFEPLVEDM (81 aa)) is lipid-binding and lipoprotein association. O-linked (GalNAc...) threonine glycosylation occurs at Thr211. Residue 228–235 (RQKLHGRL) coordinates heparin. Residues 265–316 (NQMRLQAEAFQARLRSWFEPLVEDMQRQWAGLVEKVQLALRPSPTSPPSENH) form a homooligomerization region. Residues 277–289 (RLRSWFEPLVEDM) form a specificity for association with VLDL region. A glycan (O-linked (GalNAc...) threonine) is linked at Thr309. The O-linked (GalNAc...) serine glycan is linked to Ser310.

Belongs to the apolipoprotein A1/A4/E family. Homotetramer. May interact with ABCA1; functionally associated with ABCA1 in the biogenesis of HDLs. May interact with APP/A4 amyloid-beta peptide; the interaction is extremely stable in vitro but its physiological significance is unclear. May interact with MAPT. May interact with MAP2. In the cerebrospinal fluid, interacts with secreted SORL1. Interacts with PMEL; this allows the loading of PMEL luminal fragment on ILVs to induce fibril nucleation. APOE exists as multiple glycosylated and sialylated glycoforms within cells and in plasma. The extent of glycosylation and sialylation are tissue and context specific. In terms of processing, glycated in plasma VLDL. Post-translationally, phosphorylated by FAM20C in the extracellular medium.

It is found in the secreted. It localises to the extracellular space. The protein resides in the extracellular matrix. Its subcellular location is the extracellular vesicle. The protein localises to the endosome. It is found in the multivesicular body. Its function is as follows. APOE is an apolipoprotein, a protein associating with lipid particles, that mainly functions in lipoprotein-mediated lipid transport between organs via the plasma and interstitial fluids. APOE is a core component of plasma lipoproteins and is involved in their production, conversion and clearance. Apolipoproteins are amphipathic molecules that interact both with lipids of the lipoprotein particle core and the aqueous environment of the plasma. As such, APOE associates with chylomicrons, chylomicron remnants, very low density lipoproteins (VLDL) and intermediate density lipoproteins (IDL) but shows a preferential binding to high-density lipoproteins (HDL). It also binds a wide range of cellular receptors including the LDL receptor/LDLR and the very low-density lipoprotein receptor/VLDLR that mediate the cellular uptake of the APOE-containing lipoprotein particles. Finally, APOE also has a heparin-binding activity and binds heparan-sulfate proteoglycans on the surface of cells, a property that supports the capture and the receptor-mediated uptake of APOE-containing lipoproteins by cells. The protein is Apolipoprotein E (APOE) of Bos taurus (Bovine).